The sequence spans 284 residues: Ribosomal RNA small subunit methyltransferase A (284 aa).

Residues His23, Leu25, Gly50, Glu71, Asp92, and Asn121 each coordinate S-adenosyl-L-methionine.

This sequence belongs to the class I-like SAM-binding methyltransferase superfamily. rRNA adenine N(6)-methyltransferase family. RsmA subfamily.

The protein resides in the cytoplasm. It catalyses the reaction adenosine(1518)/adenosine(1519) in 16S rRNA + 4 S-adenosyl-L-methionine = N(6)-dimethyladenosine(1518)/N(6)-dimethyladenosine(1519) in 16S rRNA + 4 S-adenosyl-L-homocysteine + 4 H(+). Specifically dimethylates two adjacent adenosines (A1518 and A1519) in the loop of a conserved hairpin near the 3'-end of 16S rRNA in the 30S particle. May play a critical role in biogenesis of 30S subunits. The polypeptide is Ribosomal RNA small subunit methyltransferase A (Verminephrobacter eiseniae (strain EF01-2)).